The primary structure comprises 239 residues: Ribonuclease PH (239 aa).

Phosphate is bound by residues arginine 86 and glycine 124 to arginine 126.

The protein belongs to the RNase PH family. In terms of assembly, homohexameric ring arranged as a trimer of dimers.

It catalyses the reaction tRNA(n+1) + phosphate = tRNA(n) + a ribonucleoside 5'-diphosphate. In terms of biological role, phosphorolytic 3'-5' exoribonuclease that plays an important role in tRNA 3'-end maturation. Removes nucleotide residues following the 3'-CCA terminus of tRNAs; can also add nucleotides to the ends of RNA molecules by using nucleoside diphosphates as substrates, but this may not be physiologically important. Probably plays a role in initiation of 16S rRNA degradation (leading to ribosome degradation) during starvation. This Psychromonas ingrahamii (strain DSM 17664 / CCUG 51855 / 37) protein is Ribonuclease PH.